The sequence spans 319 residues: D-alanine--D-alanine ligase (319 aa).

Positions 1–23 (MTGPEWAHTRGTKVGQSSRTPPK) are disordered. An ATP-grasp domain is found at 120 to 313 (KDAFVAAGLP…FGKLCAWMVE (194 aa)). ATP is bound at residue 147 to 197 (MQPPYVVKPNNEGSSVGVYLVHEAANGPPQLSEDMPQEVMVEAFAPGRELT). Residues D264, E280, and N282 each coordinate Mg(2+).

The protein belongs to the D-alanine--D-alanine ligase family. Mg(2+) serves as cofactor. Requires Mn(2+) as cofactor.

The protein resides in the cytoplasm. It carries out the reaction 2 D-alanine + ATP = D-alanyl-D-alanine + ADP + phosphate + H(+). Its pathway is cell wall biogenesis; peptidoglycan biosynthesis. Its function is as follows. Cell wall formation. This Roseobacter denitrificans (strain ATCC 33942 / OCh 114) (Erythrobacter sp. (strain OCh 114)) protein is D-alanine--D-alanine ligase.